Here is a 473-residue protein sequence, read N- to C-terminus: ATP synthase subunit beta (473 aa).

158–165 (GGAGVGKT) is an ATP binding site.

Belongs to the ATPase alpha/beta chains family. F-type ATPases have 2 components, CF(1) - the catalytic core - and CF(0) - the membrane proton channel. CF(1) has five subunits: alpha(3), beta(3), gamma(1), delta(1), epsilon(1). CF(0) has three main subunits: a(1), b(2) and c(9-12). The alpha and beta chains form an alternating ring which encloses part of the gamma chain. CF(1) is attached to CF(0) by a central stalk formed by the gamma and epsilon chains, while a peripheral stalk is formed by the delta and b chains.

It localises to the cell membrane. It carries out the reaction ATP + H2O + 4 H(+)(in) = ADP + phosphate + 5 H(+)(out). Its function is as follows. Produces ATP from ADP in the presence of a proton gradient across the membrane. The catalytic sites are hosted primarily by the beta subunits. The chain is ATP synthase subunit beta from Geobacillus sp. (strain WCH70).